Consider the following 90-residue polypeptide: Iron oxidase (90 aa).

Positions 1-37 (MSEKDKMITRRDALRNIAVVVGSVATTTMMGVGVADA) form a signal peptide, tat-type signal. Positions 57, 60, 69, and 82 each coordinate [4Fe-4S] cluster.

It belongs to the high-potential iron-sulfur protein (HiPIP) family. As to quaternary structure, homomultimer. Post-translationally, predicted to be exported by the Tat system. The position of the signal peptide cleavage has been experimentally proven.

It is found in the periplasm. Catalyzes the oxidation of Fe(2+) to Fe(3+) coupled to cytochrome c552 reduction. In Acidithiobacillus ferrooxidans (Thiobacillus ferrooxidans), this protein is Iron oxidase (iro).